A 196-amino-acid chain; its full sequence is Lipoprotein signal peptidase (196 aa).

3 consecutive transmembrane segments (helical) span residues 43 to 63 (LMLK…GISF), 75 to 95 (AVFI…MVCS), and 100 to 120 (GFAG…DRLF). Active-site residues include Asp126 and Asp144. Residues 135-155 (YSFPVFNLADCFITIGVIILI) traverse the membrane as a helical segment.

It belongs to the peptidase A8 family.

The protein resides in the cell inner membrane. It catalyses the reaction Release of signal peptides from bacterial membrane prolipoproteins. Hydrolyzes -Xaa-Yaa-Zaa-|-(S,diacylglyceryl)Cys-, in which Xaa is hydrophobic (preferably Leu), and Yaa (Ala or Ser) and Zaa (Gly or Ala) have small, neutral side chains.. It functions in the pathway protein modification; lipoprotein biosynthesis (signal peptide cleavage). Functionally, this protein specifically catalyzes the removal of signal peptides from prolipoproteins. This chain is Lipoprotein signal peptidase, found in Rickettsia canadensis (strain McKiel).